The sequence spans 415 residues: Multidrug resistance protein MdtA (415 aa).

Positions 1 to 21 (MKGSYKSRWVIVIVVVIAAIA) are cleaved as a signal peptide. Disordered stretches follow at residues 32–59 (SRSA…SGPL) and 392–415 (EAQS…GARS). A compositionally biased stretch (basic and acidic residues) spans 399–415 (SEEKATSREYAKKGARS).

This sequence belongs to the membrane fusion protein (MFP) (TC 8.A.1) family. In terms of assembly, part of a tripartite efflux system composed of MdtA, MdtB and MdtC.

Its subcellular location is the cell inner membrane. The MdtABC tripartite complex confers resistance against novobiocin and deoxycholate. The chain is Multidrug resistance protein MdtA from Escherichia coli O17:K52:H18 (strain UMN026 / ExPEC).